The primary structure comprises 322 residues: Transcription factor Atoh8 (322 aa).

3 disordered regions span residues 77–96 (PVPASVAPAVPPGGGTDTAR), 101–144 (IRAP…EAHS), and 159–221 (PPAR…ATAA). Basic and acidic residues predominate over residues 101–111 (IRAPEVSDARK). The segment at 231–244 (TRRLLANARERTRV) is basic motif; degenerate. One can recognise a bHLH domain in the interval 231 to 283 (TRRLLANARERTRVHTISAAFEALRKQVPCYSYGQKLSKLAILRIACNYILSL). A helix-loop-helix motif region spans residues 245–283 (HTISAAFEALRKQVPCYSYGQKLSKLAILRIACNYILSL).

In terms of assembly, efficient DNA binding requires dimerization with another bHLH protein. Interacts with NEUROG3 and NEUROD1. Interacts with ZFPM2; mediates indirect interaction with GATA4. Forms a heterodimer with TCF3; repress transcription of TCF3 and TCF3/NEUROG3 dimer-induced transactivation of E box-dependent promoters. Expressed by subsets of mature neurons. Expressed in kidney (podocytes). Expression is restricted to the atria, lung mesenchyme, and vascular smooth muscle.

Its subcellular location is the nucleus. The protein localises to the nucleus speckle. It localises to the cytoplasm. Transcription factor that binds a palindromic (canonical) core consensus DNA sequence 5'-CANNTG- 3' known as an E-box element, possibly as a heterodimer with other bHLH proteins. Regulates endothelial cell proliferation, migration and tube-like structures formation. Modulates endothelial cell differentiation through NOS3. May be implicated in specification and differentiation of neuronal cell lineages in the brain. May participate in kidney development and may be involved in podocyte differentiation. During early embryonic development is involved in tissue-specific differentiation processes that are dependent on class II bHLH factors and namely modulates the differentiation program initiated by the pro-endocrine factor NEUROG3. During myogenesis, may play a role during the transition of myoblasts from the proliferative phase to the differentiation phase. Positively regulates HAMP transcription in two ways, firstly by acting directly on the HAMP promoter via E-boxes binding and indirectly through increased phosphorylation of SMAD protein complex. Repress NEUROG3-dependent gene activation in a gene-specific manner through at least two mechanisms; requires only either the sequestering of a general partner such as TCF3 through heterodimerization, either also requires binding of the bHLH domain to DNA via a basic motif. The polypeptide is Transcription factor Atoh8 (Mus musculus (Mouse)).